The primary structure comprises 289 residues: Phenylalanine-4-hydroxylase (289 aa).

Fe cation is bound by residues H144, H149, and E189.

This sequence belongs to the biopterin-dependent aromatic amino acid hydroxylase family. The cofactor is Fe(2+).

It catalyses the reaction (6R)-L-erythro-5,6,7,8-tetrahydrobiopterin + L-phenylalanine + O2 = (4aS,6R)-4a-hydroxy-L-erythro-5,6,7,8-tetrahydrobiopterin + L-tyrosine. It functions in the pathway amino-acid degradation; L-phenylalanine degradation; acetoacetate and fumarate from L-phenylalanine: step 1/6. The protein is Phenylalanine-4-hydroxylase (phhA) of Vibrio cholerae serotype O1 (strain ATCC 39315 / El Tor Inaba N16961).